We begin with the raw amino-acid sequence, 881 residues long: MVNPGPPGLIAGLLLAALSLSSVDGTKALGFVGHGYNMTVSQGHEAKLNCSLQGMEEPEIQWLKDGVPVQSADQMYIPVDEDHWISFLSLKNVERPDAGRYWCEAEHSGRKSVSDAIWVMVEGVPYFTLEPKDLSVTPNSPFNMTCAAVGPPEPLVIFWWVGDSPLGKSESSPSVLQIPGIRERTAFSCEAHNAKGVSSSRTAIVEVKGLPYPPFNVTISKVTGSTATVTWSPGFNSFSLIKSCTIQVQSLHGNREMYSRLTSVPPFAVVLDDLQPLTNHSVRVQCTNEMGASPFSEWITFNTKEKVPQLIPQNVHMTKTDSCLLLDWEDVDPDKEGYNILGFKVQWEQENTTQGELFVQENQANLTKWNPEKDLTIRICIANAAGCGPWSEFLLAGSKEEAGKQRHPHTRMSWVPMVLGILTALVTVVAMTLIFLRKGRKETRFGNMLGSMLGRGGPVIQFTAARSFNRRGPEVMEATLDSIGISDELKSKLKDVLIQQQQFTLGRTLGKGEFGSVREAQLKMEDDTMQKVAVKMLKAEIFCSSDIEEFLREAAFMKEFDHPNVCKLIGVSLRSRTKGRLPVPMVILPFMKHGDLHTFLLMSRIGEEPIALPIQTLVRFMIDICSGMEYLSSKNFIHRDLATRNCMLNEDMTVCVADFGLSKKIYSGDYYRQGCASKLPVKWLALESLADNVYTVHSDVWAFGVTLWEIVTRGQTPYAGVENSEIYSYLTAGNRLKQPPDCLDELYEMMCQCWITEPKRRPSFVDLKRRLEAIWGRLSILSASHDQLYVNLGETCGAAAAVSGLHSAFCKEEDYCAGPSQTCGTSAITSDYRYIVNPGCLREGNEWSSSAQNGEARGLLHEEEEEEEEEEMQEEQVVITL.

An N-terminal signal peptide occupies residues 1 to 28 (MVNPGPPGLIAGLLLAALSLSSVDGTKA). Ig-like C2-type domains follow at residues 29-114 (LGFV…KSVS) and 125-206 (PYFT…AIVE). At 29-414 (LGFVGHGYNM…QRHPHTRMSW (386 aa)) the chain is on the extracellular side. Residues Asn-37 and Asn-49 are each glycosylated (N-linked (GlcNAc...) asparagine). A disulfide bond links Cys-50 and Cys-103. Residue Asn-143 is glycosylated (N-linked (GlcNAc...) asparagine). A disulfide bridge connects residues Cys-146 and Cys-189. Fibronectin type-III domains are found at residues 213–306 (PPFN…TKEK) and 311–401 (IPQN…SKEE). N-linked (GlcNAc...) asparagine glycans are attached at residues Asn-216, Asn-279, Asn-351, and Asn-365. A helical membrane pass occupies residues 415–435 (VPMVLGILTALVTVVAMTLIF). Over 436 to 881 (LRKGRKETRF…MQEEQVVITL (446 aa)) the chain is Cytoplasmic. In terms of domain architecture, Protein kinase spans 503–774 (FTLGRTLGKG…VDLKRRLEAI (272 aa)). ATP contacts are provided by residues 509–517 (LGKGEFGSV) and Lys-535. Asp-640 functions as the Proton acceptor in the catalytic mechanism. Phosphotyrosine; by autocatalysis is present on Tyr-671. A disordered region spans residues 846 to 881 (EWSSSAQNGEARGLLHEEEEEEEEEEMQEEQVVITL). The segment covering 862 to 874 (EEEEEEEEEEMQE) has biased composition (acidic residues).

Belongs to the protein kinase superfamily. Tyr protein kinase family. AXL/UFO subfamily. Tyrosine phosphorylated upon receptor stimulation.

The protein resides in the cell membrane. The catalysed reaction is L-tyrosyl-[protein] + ATP = O-phospho-L-tyrosyl-[protein] + ADP + H(+). May be involved in cell adhesion processes, particularly in the central nervous system. The polypeptide is Tyrosine-protein kinase receptor TYRO3 (tyro3) (Xenopus tropicalis (Western clawed frog)).